We begin with the raw amino-acid sequence, 271 residues long: Putative phosphoenolpyruvate synthase regulatory protein (271 aa).

152–159 (GVSRCGKT) is a binding site for ADP.

It belongs to the pyruvate, phosphate/water dikinase regulatory protein family. PSRP subfamily.

It catalyses the reaction [pyruvate, water dikinase] + ADP = [pyruvate, water dikinase]-phosphate + AMP + H(+). The enzyme catalyses [pyruvate, water dikinase]-phosphate + phosphate + H(+) = [pyruvate, water dikinase] + diphosphate. Its function is as follows. Bifunctional serine/threonine kinase and phosphorylase involved in the regulation of the phosphoenolpyruvate synthase (PEPS) by catalyzing its phosphorylation/dephosphorylation. The protein is Putative phosphoenolpyruvate synthase regulatory protein of Legionella pneumophila (strain Paris).